We begin with the raw amino-acid sequence, 666 residues long: Threonine--tRNA ligase (666 aa).

The region spanning 7–70 is the TGS domain; that stretch reads QQVTLTVTLP…TADCTAEIIT (64 aa). Residues 253–555 are catalytic; it reads DHRKLGTELE…LIEHTAGNFP (303 aa). Residues Cys-351, His-402, and His-532 each contribute to the Zn(2+) site.

The protein belongs to the class-II aminoacyl-tRNA synthetase family. Homodimer. The cofactor is Zn(2+).

The protein resides in the cytoplasm. The catalysed reaction is tRNA(Thr) + L-threonine + ATP = L-threonyl-tRNA(Thr) + AMP + diphosphate + H(+). Functionally, catalyzes the attachment of threonine to tRNA(Thr) in a two-step reaction: L-threonine is first activated by ATP to form Thr-AMP and then transferred to the acceptor end of tRNA(Thr). Also edits incorrectly charged L-seryl-tRNA(Thr). This Chlorobium phaeovibrioides (strain DSM 265 / 1930) (Prosthecochloris vibrioformis (strain DSM 265)) protein is Threonine--tRNA ligase.